The following is a 296-amino-acid chain: DNA primase small subunit PriS (296 aa).

Residues Asp82, Asp84, and Asp191 contribute to the active site.

Belongs to the eukaryotic-type primase small subunit family. As to quaternary structure, heterodimer of a small subunit (PriS) and a large subunit (PriL). Mg(2+) serves as cofactor. Requires Mn(2+) as cofactor.

Its function is as follows. Catalytic subunit of DNA primase, an RNA polymerase that catalyzes the synthesis of short RNA molecules used as primers for DNA polymerase during DNA replication. The small subunit contains the primase catalytic core and has DNA synthesis activity on its own. Binding to the large subunit stabilizes and modulates the activity, increasing the rate of DNA synthesis while decreasing the length of the DNA fragments, and conferring RNA synthesis capability. The DNA polymerase activity may enable DNA primase to also catalyze primer extension after primer synthesis. May also play a role in DNA repair. This chain is DNA primase small subunit PriS, found in Methanopyrus kandleri (strain AV19 / DSM 6324 / JCM 9639 / NBRC 100938).